A 211-amino-acid polypeptide reads, in one-letter code: Histone H1t (211 aa).

Alanine 1 is modified (N-acetylalanine). The segment covering 1 to 16 (AETAPAAPADSVPASV) has biased composition (low complexity). The interval 1 to 42 (AETAPAAPADSVPASVEKPPAKKRGKKPVGLTGTSRKAPSAS) is disordered. Residues 32–42 (TGTSRKAPSAS) are compositionally biased toward polar residues. The region spanning 39 to 112 (PSASVSKLIT…GASGSFKLSK (74 aa)) is the H15 domain. A Citrulline modification is found at arginine 57. The disordered stretch occupies residues 101–211 (GTGASGSFKL…TNPRKATNRK (111 aa)). Residues 121–135 (GKVKKPAAAKTKKLV) show a composition bias toward basic residues. The residue at position 142 (serine 142) is a Phosphoserine. Over residues 147–156 (KANKRAKKSR) the composition is skewed to basic residues. Threonine 158 carries the phosphothreonine modification. 2 positions are modified to phosphoserine: serine 166 and serine 181. Residues 176–189 (KQQRKSPAKARAAK) are compositionally biased toward basic residues.

This sequence belongs to the histone H1/H5 family. Phosphorylated in early spermatids. Post-translationally, citrullination at Arg-57 (H1R54ci) by PADI4 takes place within the DNA-binding site of H1 and results in its displacement from chromatin and global chromatin decondensation, thereby promoting pluripotency and stem cell maintenance. In terms of tissue distribution, testis-specific.

The protein resides in the nucleus. The protein localises to the chromosome. Functionally, testis-specific histone H1 that forms less compacted chromatin compared to other H1 histone subtypes. Formation of more relaxed chromatin may be required to promote chromatin architecture required for proper chromosome regulation during meiosis, such as homologous recombination. Histones H1 act as linkers that bind to nucleosomes and compact polynucleosomes into a higher-order chromatin configuration. In Sus scrofa (Pig), this protein is Histone H1t.